Consider the following 516-residue polypeptide: MSITSPPIEVSVLTDSIKNLLEKNFLRVVVKGELSNVSLQTSGHLYFAIKDSKAVLNGAFFHFRSKYFDRKPKDGDYVILHGKLTVYAPRGQYQIVAYALTFSGEGNLLQQFEERKQRLAAEGYFDPKRKKPLPSGARVIGVITSPTGAVIQDILRVLSRRCHQFQVILYPVTVQGATAAQEISQAIQFFNQNSMRVHALIIARGGGSIEDLWAFNEEELVKSIVASSIPIISAVGHETDFTLCDFASDVRAPTPSAAAEIVCKSSDQYRQELQNLRRYVSSHARQFIAAKKNLLTHWQRHLASVDFYHTAQQTLDYTRAALERGIETKLEYYKQRFAQYRRWLKSDVLIRIEKHLADLNQSLMLSIKNKIYTKKTSLNQLYTSCLKNELLNLQHRTQHSRNILSQLSRRLHIAIASSQQTHQECLVRLQNELSFTIQHLLTKAKERCQAIQEQASSLNPKNVLKRGFAQLFDFNKHFVIISAESLKQSDLVRVCLQDGEAVVSVKEVWLNNDKKG.

This sequence belongs to the XseA family. Heterooligomer composed of large and small subunits.

It localises to the cytoplasm. The catalysed reaction is Exonucleolytic cleavage in either 5'- to 3'- or 3'- to 5'-direction to yield nucleoside 5'-phosphates.. Functionally, bidirectionally degrades single-stranded DNA into large acid-insoluble oligonucleotides, which are then degraded further into small acid-soluble oligonucleotides. This Chlamydia trachomatis serovar L2 (strain ATCC VR-902B / DSM 19102 / 434/Bu) protein is Exodeoxyribonuclease 7 large subunit.